The sequence spans 365 residues: S-adenosylmethionine:tRNA ribosyltransferase-isomerase (365 aa).

Belongs to the QueA family. Monomer.

It is found in the cytoplasm. It carries out the reaction 7-aminomethyl-7-carbaguanosine(34) in tRNA + S-adenosyl-L-methionine = epoxyqueuosine(34) in tRNA + adenine + L-methionine + 2 H(+). It participates in tRNA modification; tRNA-queuosine biosynthesis. Its function is as follows. Transfers and isomerizes the ribose moiety from AdoMet to the 7-aminomethyl group of 7-deazaguanine (preQ1-tRNA) to give epoxyqueuosine (oQ-tRNA). This Helicobacter hepaticus (strain ATCC 51449 / 3B1) protein is S-adenosylmethionine:tRNA ribosyltransferase-isomerase.